A 233-amino-acid polypeptide reads, in one-letter code: Large ribosomal subunit protein uL1 (233 aa).

It belongs to the universal ribosomal protein uL1 family. Part of the 50S ribosomal subunit.

Functionally, binds directly to 23S rRNA. The L1 stalk is quite mobile in the ribosome, and is involved in E site tRNA release. Protein L1 is also a translational repressor protein, it controls the translation of the L11 operon by binding to its mRNA. This Psychrobacter sp. (strain PRwf-1) protein is Large ribosomal subunit protein uL1.